Reading from the N-terminus, the 335-residue chain is NAC domain-containing protein 87 (335 aa).

The NAC domain occupies 21–172 (LPPGFRFHPT…EWVVCRVFHK (152 aa)). The DNA-binding element occupies 119–178 (VGMKKTLVFYRGRAPKGEKTNWVMHEYRLEGKYSYYNLPKSARDEWVVCRVFHKNNPSTT).

The protein resides in the nucleus. Binds to the promoter regions of genes involved in chlorophyll catabolic processes, such as NYC1, SGR1, SGR2 and PAO. The protein is NAC domain-containing protein 87 of Arabidopsis thaliana (Mouse-ear cress).